An 80-amino-acid chain; its full sequence is Diphthamide biosynthesis protein 3 (80 aa).

In terms of domain architecture, DPH-type MB spans Phe-4 to Asp-60. Fe cation contacts are provided by Cys-26, Cys-28, Cys-48, and Cys-51.

Belongs to the DPH3 family. As to quaternary structure, component of the 2-(3-amino-3-carboxypropyl)histidine synthase complex composed of dph-1, dph-2, dph-3 and a NADH-dependent reductase. It depends on Fe(2+) as a cofactor.

The enzyme catalyses [3Fe-4S](1+)-[protein] + Fe(2+)-[Dph3] = [3Fe-4S](0)-[protein] + Fe(3+)-[Dph3]. It catalyses the reaction 2 [3Fe-4S](0)-[protein] + 2 Fe(2+)-[Dph3] + NADH = 2 [4Fe-4S](1+)-[protein] + 2 [Dph3] + NAD(+) + H(+). The protein operates within protein modification; peptidyl-diphthamide biosynthesis. Its function is as follows. Required for the first step of diphthamide biosynthesis, a post-translational modification of histidine which occurs in elongation factor 2. Dph-1 and dph-2 transfer a 3-amino-3-carboxypropyl (ACP) group from S-adenosyl-L-methionine (SAM) to a histidine residue, the reaction is assisted by a reduction system comprising dph-3 and a NADH-dependent reductase. Acts as an electron donor to reduce the Fe-S cluster in dph1-dph2 keeping the [4Fe-4S] clusters in the active and reduced state. Restores iron to dph-1-dph-2 iron-sulfur clusters which have degraded from [4Fe-4S] to [3Fe-4S] by donating an iron atom to reform [4Fe-4S] clusters, in a manner dependent on the presence of elongation factor 2 and SAM. Associates with the elongator complex and is required for tRNA Wobble base modifications mediated by the elongator complex. The elongator complex is required for multiple tRNA modifications, including mcm5U (5-methoxycarbonylmethyl uridine), mcm5s 2U (5-methoxycarbonylmethyl-2-thiouridine), and ncm5U (5-carbamoylmethyl uridine). This Caenorhabditis elegans protein is Diphthamide biosynthesis protein 3.